The following is a 263-amino-acid chain: Methylesterase 3 (263 aa).

Serine 85 (acyl-ester intermediate) is an active-site residue. Catalysis depends on charge relay system residues aspartate 213 and histidine 241.

This sequence belongs to the AB hydrolase superfamily. Methylesterase family.

It carries out the reaction methyl (indol-3-yl)acetate + H2O = (indol-3-yl)acetate + methanol + H(+). It catalyses the reaction methyl (-)-jasmonate + H2O = jasmonate + methanol + H(+). It functions in the pathway plant hormone biosynthesis. It participates in lipid metabolism; oxylipin biosynthesis. Functionally, methylesterase shown to have carboxylesterase activity, methyl indole-3-acetic acid (MeIAA) esterase activity and methyl jasmonate (MeJA) esterase activity in vitro. The sequence is that of Methylesterase 3 from Arabidopsis thaliana (Mouse-ear cress).